A 24-amino-acid polypeptide reads, in one-letter code: Brevinin-1Ecb (24 aa).

A disulfide bridge links Cys18 with Cys24.

As to expression, expressed by the skin glands.

Its subcellular location is the secreted. Shows antibacterial activity against representative Gram-negative and Gram-positive bacterial species, and hemolytic activity. This chain is Brevinin-1Ecb, found in Pelophylax ridibundus (Marsh frog).